The chain runs to 692 residues: Elongation factor G (692 aa).

A tr-type G domain is found at glutamate 8–threonine 282. GTP contacts are provided by residues alanine 17–threonine 24, aspartate 81–histidine 85, and asparagine 135–aspartate 138.

This sequence belongs to the TRAFAC class translation factor GTPase superfamily. Classic translation factor GTPase family. EF-G/EF-2 subfamily.

The protein localises to the cytoplasm. Its function is as follows. Catalyzes the GTP-dependent ribosomal translocation step during translation elongation. During this step, the ribosome changes from the pre-translocational (PRE) to the post-translocational (POST) state as the newly formed A-site-bound peptidyl-tRNA and P-site-bound deacylated tRNA move to the P and E sites, respectively. Catalyzes the coordinated movement of the two tRNA molecules, the mRNA and conformational changes in the ribosome. This Trichormus variabilis (strain ATCC 29413 / PCC 7937) (Anabaena variabilis) protein is Elongation factor G.